The chain runs to 252 residues: MGVAFDKCETRPANIDAILNGLDRYNPETTTVFQDYVVQQCEDRTFDCYANLALLKLYQFNPHLLQPETVTNILAKALTVFPSPAFSLCLALLPAHTQPFPATNDEAQAASQTSDFVESVQKLARLSTLLESAQYAQFWSTLNSDDLYADLVADVAGFEELVRIRIAVEVGKTFREITADVLEQWLDLRSREALEKFVVEVCSWELDKSAPAGTVVKVPTNKENEARSEVKSERVGIEQFGRVLRRGFEQAA.

A PCI domain is found at 46-225 (FDCYANLALL…VKVPTNKENE (180 aa)).

This sequence belongs to the eIF-3 subunit K family. As to quaternary structure, component of the eukaryotic translation initiation factor 3 (eIF-3) complex.

It localises to the cytoplasm. Its function is as follows. Component of the eukaryotic translation initiation factor 3 (eIF-3) complex, which is involved in protein synthesis of a specialized repertoire of mRNAs and, together with other initiation factors, stimulates binding of mRNA and methionyl-tRNAi to the 40S ribosome. The eIF-3 complex specifically targets and initiates translation of a subset of mRNAs involved in cell proliferation. This Aspergillus terreus (strain NIH 2624 / FGSC A1156) protein is Eukaryotic translation initiation factor 3 subunit K.